Here is a 262-residue protein sequence, read N- to C-terminus: GTP cyclohydrolase FolE2 (262 aa).

This sequence belongs to the GTP cyclohydrolase IV family.

The catalysed reaction is GTP + H2O = 7,8-dihydroneopterin 3'-triphosphate + formate + H(+). It functions in the pathway cofactor biosynthesis; 7,8-dihydroneopterin triphosphate biosynthesis; 7,8-dihydroneopterin triphosphate from GTP: step 1/1. Functionally, converts GTP to 7,8-dihydroneopterin triphosphate. The chain is GTP cyclohydrolase FolE2 from Dichelobacter nodosus (strain VCS1703A).